The following is a 618-amino-acid chain: Proline--tRNA ligase (618 aa).

The protein belongs to the class-II aminoacyl-tRNA synthetase family. ProS type 1 subfamily. Homodimer.

It localises to the cytoplasm. The enzyme catalyses tRNA(Pro) + L-proline + ATP = L-prolyl-tRNA(Pro) + AMP + diphosphate. In terms of biological role, catalyzes the attachment of proline to tRNA(Pro) in a two-step reaction: proline is first activated by ATP to form Pro-AMP and then transferred to the acceptor end of tRNA(Pro). As ProRS can inadvertently accommodate and process non-cognate amino acids such as alanine and cysteine, to avoid such errors it has two additional distinct editing activities against alanine. One activity is designated as 'pretransfer' editing and involves the tRNA(Pro)-independent hydrolysis of activated Ala-AMP. The other activity is designated 'posttransfer' editing and involves deacylation of mischarged Ala-tRNA(Pro). The misacylated Cys-tRNA(Pro) is not edited by ProRS. The chain is Proline--tRNA ligase from Streptococcus pyogenes serotype M18 (strain MGAS8232).